A 247-amino-acid polypeptide reads, in one-letter code: 1-(5-phosphoribosyl)-5-[(5-phosphoribosylamino)methylideneamino] imidazole-4-carboxamide isomerase (247 aa).

Residue Asp8 is the Proton acceptor of the active site. Catalysis depends on Asp130, which acts as the Proton donor.

It belongs to the HisA/HisF family.

It localises to the cytoplasm. It carries out the reaction 1-(5-phospho-beta-D-ribosyl)-5-[(5-phospho-beta-D-ribosylamino)methylideneamino]imidazole-4-carboxamide = 5-[(5-phospho-1-deoxy-D-ribulos-1-ylimino)methylamino]-1-(5-phospho-beta-D-ribosyl)imidazole-4-carboxamide. It functions in the pathway amino-acid biosynthesis; L-histidine biosynthesis; L-histidine from 5-phospho-alpha-D-ribose 1-diphosphate: step 4/9. The sequence is that of 1-(5-phosphoribosyl)-5-[(5-phosphoribosylamino)methylideneamino] imidazole-4-carboxamide isomerase from Leptospira biflexa serovar Patoc (strain Patoc 1 / Ames).